We begin with the raw amino-acid sequence, 717 residues long: Ribosomal RNA large subunit methyltransferase K/L (717 aa).

In terms of domain architecture, THUMP spans 43 to 154 (IGYKACLWSR…KGKANITLDL (112 aa)).

This sequence belongs to the methyltransferase superfamily. RlmKL family.

It is found in the cytoplasm. The enzyme catalyses guanosine(2445) in 23S rRNA + S-adenosyl-L-methionine = N(2)-methylguanosine(2445) in 23S rRNA + S-adenosyl-L-homocysteine + H(+). The catalysed reaction is guanosine(2069) in 23S rRNA + S-adenosyl-L-methionine = N(2)-methylguanosine(2069) in 23S rRNA + S-adenosyl-L-homocysteine + H(+). Specifically methylates the guanine in position 2445 (m2G2445) and the guanine in position 2069 (m7G2069) of 23S rRNA. This chain is Ribosomal RNA large subunit methyltransferase K/L, found in Aeromonas hydrophila subsp. hydrophila (strain ATCC 7966 / DSM 30187 / BCRC 13018 / CCUG 14551 / JCM 1027 / KCTC 2358 / NCIMB 9240 / NCTC 8049).